Reading from the N-terminus, the 394-residue chain is Carbamoyl phosphate synthase small chain (394 aa).

The interval 1 to 188 is CPSase; sequence MIRKERAILA…ALPYAFPTLR (188 aa). L-glutamine-binding residues include Ser49, Gly240, and Gly242. A Glutamine amidotransferase type-1 domain is found at 192 to 379; that stretch reads RVVLMDFGIK…IEEIDAFDGG (188 aa). The active-site Nucleophile is Cys267. L-glutamine-binding residues include Leu268, Gln271, Asn309, Gly311, and Tyr312. Catalysis depends on residues His352 and Glu354.

This sequence belongs to the CarA family. As to quaternary structure, composed of two chains; the small (or glutamine) chain promotes the hydrolysis of glutamine to ammonia, which is used by the large (or ammonia) chain to synthesize carbamoyl phosphate. Tetramer of heterodimers (alpha,beta)4.

The enzyme catalyses hydrogencarbonate + L-glutamine + 2 ATP + H2O = carbamoyl phosphate + L-glutamate + 2 ADP + phosphate + 2 H(+). It catalyses the reaction L-glutamine + H2O = L-glutamate + NH4(+). It participates in amino-acid biosynthesis; L-arginine biosynthesis; carbamoyl phosphate from bicarbonate: step 1/1. The protein operates within pyrimidine metabolism; UMP biosynthesis via de novo pathway; (S)-dihydroorotate from bicarbonate: step 1/3. In terms of biological role, small subunit of the glutamine-dependent carbamoyl phosphate synthetase (CPSase). CPSase catalyzes the formation of carbamoyl phosphate from the ammonia moiety of glutamine, carbonate, and phosphate donated by ATP, constituting the first step of 2 biosynthetic pathways, one leading to arginine and/or urea and the other to pyrimidine nucleotides. The small subunit (glutamine amidotransferase) binds and cleaves glutamine to supply the large subunit with the substrate ammonia. The polypeptide is Carbamoyl phosphate synthase small chain (Deinococcus radiodurans (strain ATCC 13939 / DSM 20539 / JCM 16871 / CCUG 27074 / LMG 4051 / NBRC 15346 / NCIMB 9279 / VKM B-1422 / R1)).